Reading from the N-terminus, the 172-residue chain is S-ribosylhomocysteine lyase (172 aa).

Residues histidine 54, histidine 58, and cysteine 128 each coordinate Fe cation.

It belongs to the LuxS family. As to quaternary structure, homodimer. Fe cation is required as a cofactor.

It carries out the reaction S-(5-deoxy-D-ribos-5-yl)-L-homocysteine = (S)-4,5-dihydroxypentane-2,3-dione + L-homocysteine. Involved in the synthesis of autoinducer 2 (AI-2) which is secreted by bacteria and is used to communicate both the cell density and the metabolic potential of the environment. The regulation of gene expression in response to changes in cell density is called quorum sensing. Catalyzes the transformation of S-ribosylhomocysteine (RHC) to homocysteine (HC) and 4,5-dihydroxy-2,3-pentadione (DPD). This is S-ribosylhomocysteine lyase from Vibrio alginolyticus.